Consider the following 210-residue polypeptide: Large ribosomal subunit protein uL4 (210 aa).

Residues 44–54 are compositionally biased toward polar residues; sequence KRQGTASTLTR. The tract at residues 44–85 is disordered; it reads KRQGTASTLTRSEVRGGGRKPYKQKGTGRARQGSIRTPLRPG. Positions 60-71 are enriched in basic residues; the sequence is GGRKPYKQKGTG.

The protein belongs to the universal ribosomal protein uL4 family. Part of the 50S ribosomal subunit.

In terms of biological role, one of the primary rRNA binding proteins, this protein initially binds near the 5'-end of the 23S rRNA. It is important during the early stages of 50S assembly. It makes multiple contacts with different domains of the 23S rRNA in the assembled 50S subunit and ribosome. Functionally, forms part of the polypeptide exit tunnel. This is Large ribosomal subunit protein uL4 from Prochlorococcus marinus (strain MIT 9301).